The sequence spans 144 residues: D-aminoacyl-tRNA deacylase (144 aa).

A Gly-cisPro motif, important for rejection of L-amino acids motif is present at residues 136–137 (GP).

The protein belongs to the DTD family. Homodimer.

It localises to the cytoplasm. The enzyme catalyses glycyl-tRNA(Ala) + H2O = tRNA(Ala) + glycine + H(+). It carries out the reaction a D-aminoacyl-tRNA + H2O = a tRNA + a D-alpha-amino acid + H(+). In terms of biological role, an aminoacyl-tRNA editing enzyme that deacylates mischarged D-aminoacyl-tRNAs. Also deacylates mischarged glycyl-tRNA(Ala), protecting cells against glycine mischarging by AlaRS. Acts via tRNA-based rather than protein-based catalysis; rejects L-amino acids rather than detecting D-amino acids in the active site. By recycling D-aminoacyl-tRNA to D-amino acids and free tRNA molecules, this enzyme counteracts the toxicity associated with the formation of D-aminoacyl-tRNA entities in vivo and helps enforce protein L-homochirality. This chain is D-aminoacyl-tRNA deacylase, found in Mannheimia succiniciproducens (strain KCTC 0769BP / MBEL55E).